We begin with the raw amino-acid sequence, 269 residues long: GTP cyclohydrolase FolE2 (269 aa).

Belongs to the GTP cyclohydrolase IV family.

It carries out the reaction GTP + H2O = 7,8-dihydroneopterin 3'-triphosphate + formate + H(+). It participates in cofactor biosynthesis; 7,8-dihydroneopterin triphosphate biosynthesis; 7,8-dihydroneopterin triphosphate from GTP: step 1/1. Its function is as follows. Converts GTP to 7,8-dihydroneopterin triphosphate. The polypeptide is GTP cyclohydrolase FolE2 (Thiobacillus denitrificans (strain ATCC 25259 / T1)).